We begin with the raw amino-acid sequence, 166 residues long: uncharacterized protein (166 aa).

3 4Fe-4S ferredoxin-type domains span residues 44–73 (AREDLFSAVCNGCGECASACPNGLIQLKQQ), 75–104 (ATLEIDYAPCDLCGKCAEVCPTNALHPNFP), and 139–166 (STLEIDNERCNGCGECKITCFVAAITLK). C53, C56, C59, C63, C84, C87, C90, and C94 together coordinate [4Fe-4S] cluster.

This is an uncharacterized protein from Haemophilus influenzae (strain ATCC 51907 / DSM 11121 / KW20 / Rd).